The chain runs to 349 residues: UDP-3-O-acylglucosamine N-acyltransferase (349 aa).

Catalysis depends on histidine 248, which acts as the Proton acceptor.

Belongs to the transferase hexapeptide repeat family. LpxD subfamily. As to quaternary structure, homotrimer.

The catalysed reaction is a UDP-3-O-[(3R)-3-hydroxyacyl]-alpha-D-glucosamine + a (3R)-hydroxyacyl-[ACP] = a UDP-2-N,3-O-bis[(3R)-3-hydroxyacyl]-alpha-D-glucosamine + holo-[ACP] + H(+). Its pathway is bacterial outer membrane biogenesis; LPS lipid A biosynthesis. Functionally, catalyzes the N-acylation of UDP-3-O-acylglucosamine using 3-hydroxyacyl-ACP as the acyl donor. Is involved in the biosynthesis of lipid A, a phosphorylated glycolipid that anchors the lipopolysaccharide to the outer membrane of the cell. The polypeptide is UDP-3-O-acylglucosamine N-acyltransferase (Gloeothece citriformis (strain PCC 7424) (Cyanothece sp. (strain PCC 7424))).